A 425-amino-acid chain; its full sequence is UPF0597 protein VIBHAR_03081 (425 aa).

The protein belongs to the UPF0597 family.

The polypeptide is UPF0597 protein VIBHAR_03081 (Vibrio campbellii (strain ATCC BAA-1116)).